We begin with the raw amino-acid sequence, 367 residues long: 2-aminoethylphosphonate--pyruvate transaminase (367 aa).

Lysine 194 is subject to N6-(pyridoxal phosphate)lysine.

This sequence belongs to the class-V pyridoxal-phosphate-dependent aminotransferase family. PhnW subfamily. As to quaternary structure, homodimer. Requires pyridoxal 5'-phosphate as cofactor.

It carries out the reaction (2-aminoethyl)phosphonate + pyruvate = phosphonoacetaldehyde + L-alanine. In terms of biological role, involved in phosphonate degradation. The protein is 2-aminoethylphosphonate--pyruvate transaminase of Salmonella gallinarum (strain 287/91 / NCTC 13346).